We begin with the raw amino-acid sequence, 297 residues long: tRNA dimethylallyltransferase (297 aa).

An ATP-binding site is contributed by 15-22 (GPTASGKS). Residue 17 to 22 (TASGKS) participates in substrate binding. Interaction with substrate tRNA regions lie at residues 40-43 (DSMQ) and 164-168 (QRIVR).

It belongs to the IPP transferase family. In terms of assembly, monomer. Mg(2+) is required as a cofactor.

It catalyses the reaction adenosine(37) in tRNA + dimethylallyl diphosphate = N(6)-dimethylallyladenosine(37) in tRNA + diphosphate. In terms of biological role, catalyzes the transfer of a dimethylallyl group onto the adenine at position 37 in tRNAs that read codons beginning with uridine, leading to the formation of N6-(dimethylallyl)adenosine (i(6)A). This Rhizobium etli (strain ATCC 51251 / DSM 11541 / JCM 21823 / NBRC 15573 / CFN 42) protein is tRNA dimethylallyltransferase.